Reading from the N-terminus, the 427-residue chain is Gamma-glutamyl phosphate reductase (427 aa).

This sequence belongs to the gamma-glutamyl phosphate reductase family.

The protein localises to the cytoplasm. It carries out the reaction L-glutamate 5-semialdehyde + phosphate + NADP(+) = L-glutamyl 5-phosphate + NADPH + H(+). It participates in amino-acid biosynthesis; L-proline biosynthesis; L-glutamate 5-semialdehyde from L-glutamate: step 2/2. Its function is as follows. Catalyzes the NADPH-dependent reduction of L-glutamate 5-phosphate into L-glutamate 5-semialdehyde and phosphate. The product spontaneously undergoes cyclization to form 1-pyrroline-5-carboxylate. The protein is Gamma-glutamyl phosphate reductase of Rhizobium etli (strain ATCC 51251 / DSM 11541 / JCM 21823 / NBRC 15573 / CFN 42).